The sequence spans 205 residues: Peptidyl-tRNA hydrolase (205 aa).

TRNA is bound at residue tyrosine 17. The Proton acceptor role is filled by histidine 22. Positions 73 and 75 each coordinate tRNA.

It belongs to the PTH family. As to quaternary structure, monomer.

It is found in the cytoplasm. The enzyme catalyses an N-acyl-L-alpha-aminoacyl-tRNA + H2O = an N-acyl-L-amino acid + a tRNA + H(+). Hydrolyzes ribosome-free peptidyl-tRNAs (with 1 or more amino acids incorporated), which drop off the ribosome during protein synthesis, or as a result of ribosome stalling. Its function is as follows. Catalyzes the release of premature peptidyl moieties from peptidyl-tRNA molecules trapped in stalled 50S ribosomal subunits, and thus maintains levels of free tRNAs and 50S ribosomes. In Maridesulfovibrio salexigens (strain ATCC 14822 / DSM 2638 / NCIMB 8403 / VKM B-1763) (Desulfovibrio salexigens), this protein is Peptidyl-tRNA hydrolase.